The sequence spans 37 residues: Photosystem I reaction center subunit VIII (37 aa).

Residues 10–30 (IFVPLVGLVFPAIAMASLSLY) form a helical membrane-spanning segment.

Belongs to the PsaI family.

It is found in the plastid. The protein localises to the chloroplast thylakoid membrane. Its function is as follows. May help in the organization of the PsaL subunit. This is Photosystem I reaction center subunit VIII from Gossypium barbadense (Sea Island cotton).